Consider the following 218-residue polypeptide: MLEAKNLTCIRDDRCLFQQLSFCIAPGEIVQIEGPNGAGKTSLLRILAGLAEADEGQVNWRDNNIRRDRAKYHQDLLFLGHQPGIKSVLTPFENLLFYQSVFQKVDSAAIWQALAQVGLVGYEDLPVSQLSAGQQRRVALARLWLSPAPLWILDEPLTAIDKQGVSTLLALFVQHAAKGGMVLLTTHQDLGAVSHNVRKICLANTQEKSCLSACCAVN.

In terms of domain architecture, ABC transporter spans 2–217 (LEAKNLTCIR…KSCLSACCAV (216 aa)). 34–41 (GPNGAGKT) is an ATP binding site.

The protein belongs to the ABC transporter superfamily. CcmA exporter (TC 3.A.1.107) family. The complex is composed of two ATP-binding proteins (CcmA) and two transmembrane proteins (CcmB).

The protein localises to the cell inner membrane. It carries out the reaction heme b(in) + ATP + H2O = heme b(out) + ADP + phosphate + H(+). Functionally, part of the ABC transporter complex CcmAB involved in the biogenesis of c-type cytochromes; once thought to export heme, this seems not to be the case, but its exact role is uncertain. Responsible for energy coupling to the transport system. The protein is Cytochrome c biogenesis ATP-binding export protein CcmA of Yersinia pseudotuberculosis serotype I (strain IP32953).